The sequence spans 173 residues: Nicotinamide-nucleotide adenylyltransferase (173 aa).

This sequence belongs to the archaeal NMN adenylyltransferase family.

The protein localises to the cytoplasm. It carries out the reaction beta-nicotinamide D-ribonucleotide + ATP + H(+) = diphosphate + NAD(+). It participates in cofactor biosynthesis; NAD(+) biosynthesis; NAD(+) from nicotinamide D-ribonucleotide: step 1/1. This chain is Nicotinamide-nucleotide adenylyltransferase, found in Methanosarcina acetivorans (strain ATCC 35395 / DSM 2834 / JCM 12185 / C2A).